A 290-amino-acid polypeptide reads, in one-letter code: Cilia- and flagella-associated protein 298 (290 aa).

Tyr-264 carries the post-translational modification Phosphotyrosine.

This sequence belongs to the CFAP298 family. Interacts with ZMYND10.

Its subcellular location is the cytoplasm. It is found in the cytoskeleton. The protein localises to the cilium basal body. Functionally, plays a role in motile cilium function, possibly by acting on outer dynein arm assembly. Seems to be important for initiation rather than maintenance of cilium motility. Required for correct positioning of the cilium at the apical cell surface, suggesting an additional role in the planar cell polarity (PCP) pathway. May suppress canonical Wnt signaling activity. The sequence is that of Cilia- and flagella-associated protein 298 from Homo sapiens (Human).